The sequence spans 308 residues: N-acetyl-gamma-glutamyl-phosphate reductase (308 aa).

Residue C116 is part of the active site.

The protein belongs to the NAGSA dehydrogenase family. Type 2 subfamily.

The protein resides in the cytoplasm. The catalysed reaction is N-acetyl-L-glutamate 5-semialdehyde + phosphate + NADP(+) = N-acetyl-L-glutamyl 5-phosphate + NADPH + H(+). It functions in the pathway amino-acid biosynthesis; L-arginine biosynthesis; N(2)-acetyl-L-ornithine from L-glutamate: step 3/4. Functionally, catalyzes the NADPH-dependent reduction of N-acetyl-5-glutamyl phosphate to yield N-acetyl-L-glutamate 5-semialdehyde. The sequence is that of N-acetyl-gamma-glutamyl-phosphate reductase from Mesorhizobium japonicum (strain LMG 29417 / CECT 9101 / MAFF 303099) (Mesorhizobium loti (strain MAFF 303099)).